The sequence spans 372 residues: NAD(P)H-quinone oxidoreductase subunit 1, chloroplastic (372 aa).

8 helical membrane passes run 28–48 (IWICIPILVVVLGSTLGVLVI), 65–85 (PEYAGPLGIIQALIDGLKLIL), 97–117 (WLFTLGPAIVVIPIVLSYLVV), 128–148 (IGIGIFFWIAISSVAPMGLLI), 166–186 (AAQAISYEIPLALCVLAIILM), 254–274 (FGLFYVASYINLLVSALFVSV), 312–332 (GIIGLGITLVKAYIFLFLAVL), and 352–372 (FLLPVCLGNLLLTASFQITLL).

It belongs to the complex I subunit 1 family. NDH is composed of at least 16 different subunits, 5 of which are encoded in the nucleus.

Its subcellular location is the plastid. It localises to the chloroplast thylakoid membrane. The enzyme catalyses a plastoquinone + NADH + (n+1) H(+)(in) = a plastoquinol + NAD(+) + n H(+)(out). The catalysed reaction is a plastoquinone + NADPH + (n+1) H(+)(in) = a plastoquinol + NADP(+) + n H(+)(out). Its function is as follows. NDH shuttles electrons from NAD(P)H:plastoquinone, via FMN and iron-sulfur (Fe-S) centers, to quinones in the photosynthetic chain and possibly in a chloroplast respiratory chain. The immediate electron acceptor for the enzyme in this species is believed to be plastoquinone. Couples the redox reaction to proton translocation, and thus conserves the redox energy in a proton gradient. The sequence is that of NAD(P)H-quinone oxidoreductase subunit 1, chloroplastic from Staurastrum punctulatum (Green alga).